Consider the following 80-residue polypeptide: Large ribosomal subunit protein bL31 (80 aa).

Residues Cys-16, Cys-18, Cys-38, and Cys-41 each coordinate Zn(2+).

This sequence belongs to the bacterial ribosomal protein bL31 family. Type A subfamily. Part of the 50S ribosomal subunit. The cofactor is Zn(2+).

Functionally, binds the 23S rRNA. This chain is Large ribosomal subunit protein bL31, found in Rhodococcus jostii (strain RHA1).